The sequence spans 64 residues: Prokaryotic ubiquitin-like protein UBact (64 aa).

A disordered region spans residues 1-64 (MFNGEEVILF…SERYRQRTGE (64 aa)). A compositionally biased stretch (basic and acidic residues) spans 22-64 (REIHKDAPAPKRPETKKTGDRLMDRMKKVDPNQSERYRQRTGE). An Isoglutamyl lysine isopeptide (Glu-Lys) (interchain with K-? in acceptor proteins) cross-link involves residue glutamate 64.

It belongs to the ubiquitin-like protein UBact family.

May function as a protein modifier covalently attached to lysine residues of substrate proteins. This may serve to target the modified proteins for degradation by proteasomes. This is Prokaryotic ubiquitin-like protein UBact from Leptospirillum ferriphilum (strain ML-04).